A 381-amino-acid polypeptide reads, in one-letter code: Beta-1,4-galactosyltransferase 5 (381 aa).

The Cytoplasmic portion of the chain corresponds to 1 to 11 (MPTHLRFRRRS). Residues 12–32 (FLGLLFLFSLSTSALYFIYSA) traverse the membrane as a helical; Signal-anchor for type II membrane protein segment. The Lumenal segment spans residues 33-381 (PGIVNEYLFM…SRDLAPVADY (349 aa)). N-linked (GlcNAc...) asparagine glycosylation is found at N73, N82, and N120. C106 and C151 are oxidised to a cystine. Residues 162–166 (PFRNR), 201–203 (FNR), 228–229 (VD), Y257, and W289 contribute to the UDP-alpha-D-galactose site. Cysteines 222 and 241 form a disulfide. D229 lines the Mn(2+) pocket. 291–294 (GEDD) contributes to the N-acetyl-D-glucosamine binding site. Mn(2+) is bound at residue H322. Residue 322-323 (HH) participates in UDP-alpha-D-galactose binding. R333 is a binding site for N-acetyl-D-glucosamine. A glycan (N-linked (GlcNAc...) asparagine) is linked at N366.

Belongs to the glycosyltransferase 7 family. Mn(2+) is required as a cofactor.

Its subcellular location is the golgi apparatus. The protein localises to the golgi stack membrane. It carries out the reaction a beta-D-glucosyl-(1&lt;-&gt;1')-N-acylsphing-4-enine + UDP-alpha-D-galactose = a beta-D-Gal-(1-&gt;4)-beta-D-Glc-(1&lt;-&gt;1)-Cer(d18:1(4E)) + UDP + H(+). It participates in protein modification; protein glycosylation. The protein operates within sphingolipid metabolism. In terms of biological role, catalyzes the synthesis of lactosylceramide (LacCer) via the transfer of galactose from UDP-galactose to glucosylceramide (GlcCer). Required for proper patterning of the dorsoventral axis during embryogenesis through the regulation of BMP signaling. Plays a role in proteoglycan glycosylation that is required for BMP-dependent specification of the dorsoventral axis. The chain is Beta-1,4-galactosyltransferase 5 (b4galt5) from Danio rerio (Zebrafish).